We begin with the raw amino-acid sequence, 596 residues long: Elongation factor 4 (596 aa).

The tr-type G domain occupies lysine 2–glutamate 184. Residues aspartate 14 to threonine 19 and asparagine 131 to aspartate 134 each bind GTP.

This sequence belongs to the TRAFAC class translation factor GTPase superfamily. Classic translation factor GTPase family. LepA subfamily.

The protein resides in the cell inner membrane. It catalyses the reaction GTP + H2O = GDP + phosphate + H(+). Required for accurate and efficient protein synthesis under certain stress conditions. May act as a fidelity factor of the translation reaction, by catalyzing a one-codon backward translocation of tRNAs on improperly translocated ribosomes. Back-translocation proceeds from a post-translocation (POST) complex to a pre-translocation (PRE) complex, thus giving elongation factor G a second chance to translocate the tRNAs correctly. Binds to ribosomes in a GTP-dependent manner. In Shewanella sp. (strain ANA-3), this protein is Elongation factor 4.